We begin with the raw amino-acid sequence, 296 residues long: Acetylglutamate kinase (296 aa).

Substrate-binding positions include 67 to 68, R89, and N194; that span reads GG.

Belongs to the acetylglutamate kinase family. ArgB subfamily.

It localises to the cytoplasm. It carries out the reaction N-acetyl-L-glutamate + ATP = N-acetyl-L-glutamyl 5-phosphate + ADP. It participates in amino-acid biosynthesis; L-arginine biosynthesis; N(2)-acetyl-L-ornithine from L-glutamate: step 2/4. Functionally, catalyzes the ATP-dependent phosphorylation of N-acetyl-L-glutamate. The protein is Acetylglutamate kinase of Brucella anthropi (strain ATCC 49188 / DSM 6882 / CCUG 24695 / JCM 21032 / LMG 3331 / NBRC 15819 / NCTC 12168 / Alc 37) (Ochrobactrum anthropi).